Here is a 485-residue protein sequence, read N- to C-terminus: Cysteine--tRNA ligase (485 aa).

Cys-28 is a binding site for Zn(2+). The short motif at 30–40 (MTVYDYCHLGH) is the 'HIGH' region element. Zn(2+) is bound by residues Cys-212, His-237, and Glu-241. The 'KMSKS' region motif lies at 269–273 (KMSKS). Position 272 (Lys-272) interacts with ATP.

This sequence belongs to the class-I aminoacyl-tRNA synthetase family. In terms of assembly, monomer. The cofactor is Zn(2+).

The protein resides in the cytoplasm. The catalysed reaction is tRNA(Cys) + L-cysteine + ATP = L-cysteinyl-tRNA(Cys) + AMP + diphosphate. The polypeptide is Cysteine--tRNA ligase (Bordetella bronchiseptica (strain ATCC BAA-588 / NCTC 13252 / RB50) (Alcaligenes bronchisepticus)).